The following is a 133-amino-acid chain: Ribonuclease P protein component (133 aa).

Belongs to the RnpA family. Consists of a catalytic RNA component (M1 or rnpB) and a protein subunit.

The catalysed reaction is Endonucleolytic cleavage of RNA, removing 5'-extranucleotides from tRNA precursor.. In terms of biological role, RNaseP catalyzes the removal of the 5'-leader sequence from pre-tRNA to produce the mature 5'-terminus. It can also cleave other RNA substrates such as 4.5S RNA. The protein component plays an auxiliary but essential role in vivo by binding to the 5'-leader sequence and broadening the substrate specificity of the ribozyme. The polypeptide is Ribonuclease P protein component (Pseudomonas entomophila (strain L48)).